The following is a 751-amino-acid chain: Dendritic arbor reduction protein 1 (751 aa).

Residues 57–89 are compositionally biased toward low complexity; it reads NNNNTSSNNNHSSNSSSNNSNGSQTPNGNNNSS. Disordered regions lie at residues 57 to 167, 248 to 275, 304 to 351, 374 to 410, 458 to 578, and 594 to 639; these read NNNN…PNSN, LMLSSSGSSNNNGSSNSSSNTGESATSQ, TEKQ…QQHL, LQQQHQQQQHLQHNNSSSSSPKLATPGDNSGNTSSYQ, SATA…AATG, and SAIQ…AAHI. Basic residues predominate over residues 95–125; the sequence is HQHHQFHHHLHHHHSHQHHHQHHHLHQHHSH. Positions 153 to 167 are enriched in polar residues; sequence AQQQQLQPAGSPNSN. Composition is skewed to low complexity over residues 251–267, 309–351, and 374–393; these read SSSGSSNNNGSSNSSSN, RQQQ…QQHL, and LQQQHQQQQHLQHNNSSSSS. A compositionally biased stretch (polar residues) spans 400–410; the sequence is GDNSGNTSSYQ. 3 stretches are compositionally biased toward low complexity: residues 458 to 513, 527 to 548, and 594 to 610; these read SATA…SSAS, DPGSPGSSMVAAAAAAAAQRRT, and SAIQQQQQQPQQQQVPQ. C2H2-type zinc fingers lie at residues 664-688, 694-718, and 724-746; these read HHCDFVGCSKVYTKSSHLKAHQRIH, YTCQWPECEWRFARSDELTRHYRKH, and FKCIVCERSFARSDHLALHMKRH.

This sequence belongs to the krueppel C2H2-type zinc-finger protein family. As to expression, highly enriched in the peripheral nervous system but is absent from the central nervous system. Expressed in neurons with more than one dendrite including da neurons, bd neurons and the dmd1 neuron but undetectable in neurons with single dendrites such as external sensory organ neurons and chodonotal neurons.

It is found in the nucleus. Functionally, transcriptional regulator which promotes dendrite growth by suppressing, either directly or indirectly, the expression of the microtubule-severing protein spas. Determines multipolar neuron morphology in postmitotic neurons by positively regulating the expression of genes involved in nuclear positioning including several dynein genes and the nuclear migration protein nudC. The chain is Dendritic arbor reduction protein 1 from Drosophila melanogaster (Fruit fly).